Here is a 375-residue protein sequence, read N- to C-terminus: Probable RNA 3'-terminal phosphate cyclase-like protein (375 aa).

The protein belongs to the RNA 3'-terminal cyclase family. Type 2 subfamily.

It is found in the nucleus. Its subcellular location is the nucleolus. Functionally, does not have cyclase activity. Plays a role in 40S-ribosomal-subunit biogenesis in the early pre-rRNA processing steps at sites A0, A1 and A2 that are required for proper maturation of the 18S RNA. The chain is Probable RNA 3'-terminal phosphate cyclase-like protein from Arabidopsis thaliana (Mouse-ear cress).